We begin with the raw amino-acid sequence, 414 residues long: Na(+)/H(+) antiporter NhaA (414 aa).

11 helical membrane passes run valine 22 to phenylalanine 42, leucine 61 to valine 81, methionine 101 to phenylalanine 121, glycine 131 to glycine 151, leucine 171 to isoleucine 191, serine 215 to valine 235, glycine 239 to alanine 259, valine 281 to valine 301, leucine 308 to valine 328, tryptophan 343 to isoleucine 363, and lysine 379 to valine 399.

Belongs to the NhaA Na(+)/H(+) (TC 2.A.33) antiporter family.

It is found in the cell membrane. It carries out the reaction Na(+)(in) + 2 H(+)(out) = Na(+)(out) + 2 H(+)(in). Functionally, na(+)/H(+) antiporter that extrudes sodium in exchange for external protons. The protein is Na(+)/H(+) antiporter NhaA of Thermobifida fusca (strain YX).